The following is a 557-amino-acid chain: Trigger factor (557 aa).

One can recognise a PPIase FKBP-type domain in the interval 169–255 (GDVVVIDFQA…LKEIKTKELP (87 aa)). A disordered region spans residues 438 to 557 (WVDSEGNPTE…KAGKKSKKDK (120 aa)). Residues 455–466 (SEGEDRQERSES) are compositionally biased toward basic and acidic residues.

It belongs to the FKBP-type PPIase family. Tig subfamily.

The protein resides in the cytoplasm. It catalyses the reaction [protein]-peptidylproline (omega=180) = [protein]-peptidylproline (omega=0). In terms of biological role, involved in protein export. Acts as a chaperone by maintaining the newly synthesized protein in an open conformation. Functions as a peptidyl-prolyl cis-trans isomerase. The protein is Trigger factor of Synechococcus sp. (strain JA-3-3Ab) (Cyanobacteria bacterium Yellowstone A-Prime).